Reading from the N-terminus, the 88-residue chain is Small ribosomal subunit protein bS20 (88 aa).

Residues 1–27 (MANSKSAKKRALQSEKRRQHNASRRSM) form a disordered region.

Belongs to the bacterial ribosomal protein bS20 family.

Binds directly to 16S ribosomal RNA. The polypeptide is Small ribosomal subunit protein bS20 (Shewanella sp. (strain ANA-3)).